The primary structure comprises 209 residues: ATP-dependent Clp protease proteolytic subunit (209 aa).

Ser-113 functions as the Nucleophile in the catalytic mechanism. His-138 is an active-site residue.

The protein belongs to the peptidase S14 family. Fourteen ClpP subunits assemble into 2 heptameric rings which stack back to back to give a disk-like structure with a central cavity, resembling the structure of eukaryotic proteasomes.

It localises to the cytoplasm. The catalysed reaction is Hydrolysis of proteins to small peptides in the presence of ATP and magnesium. alpha-casein is the usual test substrate. In the absence of ATP, only oligopeptides shorter than five residues are hydrolyzed (such as succinyl-Leu-Tyr-|-NHMec, and Leu-Tyr-Leu-|-Tyr-Trp, in which cleavage of the -Tyr-|-Leu- and -Tyr-|-Trp bonds also occurs).. Functionally, cleaves peptides in various proteins in a process that requires ATP hydrolysis. Has a chymotrypsin-like activity. Plays a major role in the degradation of misfolded proteins. The sequence is that of ATP-dependent Clp protease proteolytic subunit from Blochmanniella floridana.